A 154-amino-acid chain; its full sequence is Transcription antitermination protein NusB (154 aa).

This sequence belongs to the NusB family.

Functionally, involved in transcription antitermination. Required for transcription of ribosomal RNA (rRNA) genes. Binds specifically to the boxA antiterminator sequence of the ribosomal RNA (rrn) operons. In Hyphomonas neptunium (strain ATCC 15444), this protein is Transcription antitermination protein NusB.